The primary structure comprises 145 residues: Ribonuclease H (145 aa).

In terms of domain architecture, RNase H type-1 spans 1 to 141 (MQEVIIYSDG…ADALANRGVA (141 aa)). Mg(2+)-binding residues include aspartate 9, glutamate 47, aspartate 69, and aspartate 133.

This sequence belongs to the RNase H family. Monomer. It depends on Mg(2+) as a cofactor.

It is found in the cytoplasm. It catalyses the reaction Endonucleolytic cleavage to 5'-phosphomonoester.. In terms of biological role, endonuclease that specifically degrades the RNA of RNA-DNA hybrids. The chain is Ribonuclease H from Cupriavidus pinatubonensis (strain JMP 134 / LMG 1197) (Cupriavidus necator (strain JMP 134)).